The primary structure comprises 198 residues: Holliday junction branch migration complex subunit RuvA (198 aa).

A domain I region spans residues 1-61; the sequence is MTLYKIGEIV…DYIQQTYGFK (61 aa). The interval 62–139 is domain II; the sequence is TFKERLLFTD…KIIQNKEVKK (78 aa). Residues 140-144 form a flexible linker region; the sequence is FDDIT. The segment at 144–198 is domain III; the sequence is TNIKELKQTLNKLGFKASDIDYAVNNISSTKELDLMVEESINLITTQMHANNQTT.

Belongs to the RuvA family. As to quaternary structure, homotetramer. Forms an RuvA(8)-RuvB(12)-Holliday junction (HJ) complex. HJ DNA is sandwiched between 2 RuvA tetramers; dsDNA enters through RuvA and exits via RuvB. An RuvB hexamer assembles on each DNA strand where it exits the tetramer. Each RuvB hexamer is contacted by two RuvA subunits (via domain III) on 2 adjacent RuvB subunits; this complex drives branch migration. In the full resolvosome a probable DNA-RuvA(4)-RuvB(12)-RuvC(2) complex forms which resolves the HJ.

The protein resides in the cytoplasm. Its function is as follows. The RuvA-RuvB-RuvC complex processes Holliday junction (HJ) DNA during genetic recombination and DNA repair, while the RuvA-RuvB complex plays an important role in the rescue of blocked DNA replication forks via replication fork reversal (RFR). RuvA specifically binds to HJ cruciform DNA, conferring on it an open structure. The RuvB hexamer acts as an ATP-dependent pump, pulling dsDNA into and through the RuvAB complex. HJ branch migration allows RuvC to scan DNA until it finds its consensus sequence, where it cleaves and resolves the cruciform DNA. This Mycoplasmopsis synoviae (strain 53) (Mycoplasma synoviae) protein is Holliday junction branch migration complex subunit RuvA.